The following is a 550-amino-acid chain: Hydroxylamine reductase (550 aa).

Residues Cys3, Cys6, Cys18, and Cys25 each coordinate [2Fe-2S] cluster. Residues His249, Glu273, Cys317, Cys405, Cys433, Cys458, Glu492, and Lys494 each coordinate hybrid [4Fe-2O-2S] cluster. Position 405 is a cysteine persulfide (Cys405).

The protein belongs to the HCP family. [2Fe-2S] cluster serves as cofactor. The cofactor is hybrid [4Fe-2O-2S] cluster.

Its subcellular location is the cytoplasm. It catalyses the reaction A + NH4(+) + H2O = hydroxylamine + AH2 + H(+). Its function is as follows. Catalyzes the reduction of hydroxylamine to form NH(3) and H(2)O. The protein is Hydroxylamine reductase of Proteus mirabilis (strain HI4320).